The following is a 187-amino-acid chain: UPF0302 protein SERP1032 (187 aa).

It belongs to the UPF0302 family.

This chain is UPF0302 protein SERP1032, found in Staphylococcus epidermidis (strain ATCC 35984 / DSM 28319 / BCRC 17069 / CCUG 31568 / BM 3577 / RP62A).